The chain runs to 1701 residues: Rho guanine nucleotide exchange factor TIAM2 (1701 aa).

Disordered regions lie at residues 1–21 (MGNS…NTIT), 201–250 (SPTL…SSWY), 265–293 (GSFL…FNQS), and 389–417 (SLSR…DGLN). The N-myristoyl glycine moiety is linked to residue G2. Residues 238 to 248 (SKGSSLSSESS) are compositionally biased toward low complexity. A compositionally biased stretch (basic and acidic residues) spans 397–413 (LQEPRSKEGSDYFDSRS). The PH 1 domain maps to 506-620 (VVRKAGWLFF…WVTAVHSACA (115 aa)). The stretch at 628-695 (GKEDTLRLLK…KFHMDLFRMR (68 aa)) forms a coiled coil. Residues 810 to 881 (IQTYVHFQDN…YMQQQVYDEI (72 aa)) form the RBD domain. The region spanning 890 to 976 (DVQLTKTGSV…GLTLIARPPD (87 aa)) is the PDZ domain. The tract at residues 1070–1092 (DSQANGMEGPRENQDPPPRSLAR) is disordered. The 195-residue stretch at 1099-1293 (RLRKVIQELV…EKVASHINEM (195 aa)) folds into the DH domain. Residues 1347–1478 (DLELTVFVFK…EKTCKDRLVP (132 aa)) enclose the PH 2 domain. 2 disordered regions span residues 1500–1556 (NSSS…GLAD) and 1568–1628 (LSDE…PKLV). The segment covering 1513-1527 (GTLLDSDEGSLSSGT) has biased composition (low complexity). At S1583 the chain carries Phosphoserine. A compositionally biased stretch (basic and acidic residues) spans 1596-1607 (RISEDPDVHPEA). At T1648 the chain carries Phosphothreonine.

This sequence belongs to the TIAM family. In terms of assembly, interacts with MAP1A, MAP1B, PARP1 and YWHAE. Interacts with CD44, PARD3 and MAPK8IP2. In terms of processing, phosphorylated on serine and threonine residues. Phosphorylated on Thr-1648 by Rho-kinase. Its phosphorylation by Rho-kinase inhibits its guanine nucleotide exchange activity, its interaction with MAP1A, MAP1B, PARP1 and YWHAE and reduces its ability to promote neurite growth. In terms of tissue distribution, expressed in the occipital, frontal and temporal lobes, cerebellum, putamen and testis.

Its subcellular location is the cytoplasm. It is found in the cell projection. It localises to the lamellipodium. The protein localises to the filopodium. The protein resides in the growth cone. Its subcellular location is the neuron projection. It is found in the perikaryon. Functionally, modulates the activity of RHO-like proteins and connects extracellular signals to cytoskeletal activities. Acts as a GDP-dissociation stimulator protein that stimulates the GDP-GTP exchange activity of RHO-like GTPases and activates them. Mediates extracellular laminin signals to activate Rac1, contributing to neurite growth. Involved in lamellipodial formation and advancement of the growth cone of embryonic hippocampal neurons. Promotes migration of neurons in the cerebral cortex. When overexpressed, induces membrane ruffling accompanied by the accumulation of actin filaments along the altered plasma membrane. Activates specifically RAC1, but not CDC42 and RHOA. The sequence is that of Rho guanine nucleotide exchange factor TIAM2 (TIAM2) from Homo sapiens (Human).